The sequence spans 356 residues: Phosphoribosylformylglycinamidine cyclo-ligase (356 aa).

It belongs to the AIR synthase family.

The protein resides in the cytoplasm. The enzyme catalyses 2-formamido-N(1)-(5-O-phospho-beta-D-ribosyl)acetamidine + ATP = 5-amino-1-(5-phospho-beta-D-ribosyl)imidazole + ADP + phosphate + H(+). The protein operates within purine metabolism; IMP biosynthesis via de novo pathway; 5-amino-1-(5-phospho-D-ribosyl)imidazole from N(2)-formyl-N(1)-(5-phospho-D-ribosyl)glycinamide: step 2/2. This Desulfotalea psychrophila (strain LSv54 / DSM 12343) protein is Phosphoribosylformylglycinamidine cyclo-ligase.